Here is a 164-residue protein sequence, read N- to C-terminus: UPF0304 protein YfbU (164 aa).

Belongs to the UPF0304 family.

This chain is UPF0304 protein YfbU, found in Salmonella enteritidis PT4 (strain P125109).